The following is a 252-amino-acid chain: 3-dehydroquinate dehydratase (252 aa).

3-dehydroquinate contacts are provided by residues Ser21, 46-48, and Arg82; that span reads EWR. Residue His143 is the Proton donor/acceptor of the active site. The active-site Schiff-base intermediate with substrate is Lys170. Arg213, Ser232, and Gln236 together coordinate 3-dehydroquinate.

This sequence belongs to the type-I 3-dehydroquinase family. As to quaternary structure, homodimer.

It carries out the reaction 3-dehydroquinate = 3-dehydroshikimate + H2O. The protein operates within metabolic intermediate biosynthesis; chorismate biosynthesis; chorismate from D-erythrose 4-phosphate and phosphoenolpyruvate: step 3/7. Its function is as follows. Involved in the third step of the chorismate pathway, which leads to the biosynthesis of aromatic amino acids. Catalyzes the cis-dehydration of 3-dehydroquinate (DHQ) and introduces the first double bond of the aromatic ring to yield 3-dehydroshikimate. This Escherichia coli O6:K15:H31 (strain 536 / UPEC) protein is 3-dehydroquinate dehydratase.